Reading from the N-terminus, the 72-residue chain is Brevinin-2GHb (72 aa).

Positions 1 to 22 are cleaved as a signal peptide; the sequence is MFTMKKSLLLLFFLGTVSLSLC. Residues 23-42 constitute a propeptide that is removed on maturation; sequence EQERGADEDDGGEMTEELKR. Cysteines 66 and 72 form a disulfide.

Expressed by the skin glands.

It localises to the secreted. In terms of biological role, antimicrobial peptide. Active against the Gram-positive bacteria S.aureus FDA209P (MIC=16.5 ug/ml) and B.subtilis ATCC 6633 (MIC&gt;64 ug/ml), and the Gram-negative bacteria E.coli O111 (MIC=8.2 ug/ml) and E.coli ATCC 25922 (MIC=8.2 ug/ml). Not active against the fungus C.albicans. The protein is Brevinin-2GHb of Sylvirana guentheri (Gunther's frog).